The sequence spans 244 residues: Phosphoadenosine 5'-phosphosulfate reductase (244 aa).

The active-site Nucleophile; cysteine thiosulfonate intermediate is Cys239.

Belongs to the PAPS reductase family. CysH subfamily.

Its subcellular location is the cytoplasm. The catalysed reaction is [thioredoxin]-disulfide + sulfite + adenosine 3',5'-bisphosphate + 2 H(+) = [thioredoxin]-dithiol + 3'-phosphoadenylyl sulfate. The protein operates within sulfur metabolism; hydrogen sulfide biosynthesis; sulfite from sulfate: step 3/3. Its function is as follows. Catalyzes the formation of sulfite from phosphoadenosine 5'-phosphosulfate (PAPS) using thioredoxin as an electron donor. This is Phosphoadenosine 5'-phosphosulfate reductase from Klebsiella pneumoniae (strain 342).